Consider the following 52-residue polypeptide: Alpha-crystallin B chain (52 aa).

It belongs to the small heat shock protein (HSP20) family. As to quaternary structure, homodimer. Aggregates with homologous proteins, including alpha-A-crystallin and the small heat shock protein HSPB1, to form large heteromeric complexes.

Its function is as follows. May contribute to the transparency and refractive index of the lens. The protein is Alpha-crystallin B chain (CRYAB) of Turdus merula (Common blackbird).